The sequence spans 242 residues: Ribosomal RNA small subunit methyltransferase G (242 aa).

S-adenosyl-L-methionine is bound by residues Gly-81, Phe-86, 104–106 (DST), 132–133 (AE), and Arg-151.

It belongs to the methyltransferase superfamily. RNA methyltransferase RsmG family.

Its subcellular location is the cytoplasm. Specifically methylates the N7 position of a guanine in 16S rRNA. The sequence is that of Ribosomal RNA small subunit methyltransferase G from Synechococcus elongatus (strain ATCC 33912 / PCC 7942 / FACHB-805) (Anacystis nidulans R2).